The primary structure comprises 271 residues: Tryptophan synthase alpha chain (271 aa).

Active-site proton acceptor residues include Glu-49 and Asp-60.

This sequence belongs to the TrpA family. In terms of assembly, tetramer of two alpha and two beta chains.

The catalysed reaction is (1S,2R)-1-C-(indol-3-yl)glycerol 3-phosphate + L-serine = D-glyceraldehyde 3-phosphate + L-tryptophan + H2O. Its pathway is amino-acid biosynthesis; L-tryptophan biosynthesis; L-tryptophan from chorismate: step 5/5. Its function is as follows. The alpha subunit is responsible for the aldol cleavage of indoleglycerol phosphate to indole and glyceraldehyde 3-phosphate. The chain is Tryptophan synthase alpha chain from Burkholderia thailandensis (strain ATCC 700388 / DSM 13276 / CCUG 48851 / CIP 106301 / E264).